The chain runs to 450 residues: Mitochondrial distribution and morphology protein 10 (450 aa).

It belongs to the MDM10 family. In terms of assembly, component of the ER-mitochondria encounter structure (ERMES) or MDM complex, composed of MMM1, MDM10, MDM12 and MDM34. Associates with the mitochondrial outer membrane sorting assembly machinery SAM(core) complex.

Its subcellular location is the mitochondrion outer membrane. Functionally, component of the ERMES/MDM complex, which serves as a molecular tether to connect the endoplasmic reticulum and mitochondria. Components of this complex are involved in the control of mitochondrial shape and protein biogenesis and may function in phospholipid exchange. MDM10 is involved in the late assembly steps of the general translocase of the mitochondrial outer membrane (TOM complex). Functions in the TOM40-specific route of the assembly of outer membrane beta-barrel proteins, including the association of TOM40 with the receptor TOM22 and small TOM proteins. Can associate with the SAM(core) complex as well as the MDM12-MMM1 complex, both involved in late steps of the major beta-barrel assembly pathway, that is responsible for biogenesis of all outer membrane beta-barrel proteins. May act as a switch that shuttles between both complexes and channels precursor proteins into the TOM40-specific pathway. Plays a role in mitochondrial morphology and in the inheritance of mitochondria. The sequence is that of Mitochondrial distribution and morphology protein 10 from Paracoccidioides lutzii (strain ATCC MYA-826 / Pb01) (Paracoccidioides brasiliensis).